A 148-amino-acid polypeptide reads, in one-letter code: Large ribosomal subunit protein uL15 (148 aa).

The disordered stretch occupies residues 1–47 (MTKLEDLRPTPGSVKPRKRVGRGIGSGHGKTSGRGHKGQKSRGSGKV). Positions 31 to 45 (TSGRGHKGQKSRGSG) are enriched in basic residues.

The protein belongs to the universal ribosomal protein uL15 family. Part of the 50S ribosomal subunit.

Binds to the 23S rRNA. In Pseudothermotoga lettingae (strain ATCC BAA-301 / DSM 14385 / NBRC 107922 / TMO) (Thermotoga lettingae), this protein is Large ribosomal subunit protein uL15.